We begin with the raw amino-acid sequence, 176 residues long: Corrinoid adenosyltransferase (176 aa).

ATP contacts are provided by residues 6-14 (TRTGDNGTT), Lys24, 131-136 (RRLERI), and Asn155.

This sequence belongs to the Cob(I)alamin adenosyltransferase family.

It localises to the cytoplasm. The catalysed reaction is 2 cob(II)yrinate a,c diamide + reduced [electron-transfer flavoprotein] + 2 ATP = 2 adenosylcob(III)yrinate a,c-diamide + 2 triphosphate + oxidized [electron-transfer flavoprotein] + 3 H(+). The enzyme catalyses 2 cob(II)alamin + reduced [electron-transfer flavoprotein] + 2 ATP = 2 adenosylcob(III)alamin + 2 triphosphate + oxidized [electron-transfer flavoprotein] + 3 H(+). It functions in the pathway cofactor biosynthesis; adenosylcobalamin biosynthesis; adenosylcobalamin from cob(II)yrinate a,c-diamide: step 2/7. This chain is Corrinoid adenosyltransferase, found in Citrobacter freundii.